A 240-amino-acid polypeptide reads, in one-letter code: uncharacterized protein (240 aa).

The segment covering 197–210 (PLKSHSASRLNHLT) has biased composition (polar residues). The tract at residues 197-222 (PLKSHSASRLNHLTPSPRPGETPLEN) is disordered.

This is an uncharacterized protein from Caenorhabditis elegans.